The following is a 99-amino-acid chain: Protein MOST-1 (99 aa).

In terms of assembly, interacts with TSPO, IGHM and IGHD. As to expression, expressed in the heart, kidney, liver, pancreas, small intestine, ovary, testis, prostate and thymus. Expressed in all of the cancer cell lines tested.

It is found in the cytoplasm. The protein localises to the microsome membrane. Its subcellular location is the endoplasmic reticulum membrane. May be involved in cell survival, proliferation and progression of cancer cells. In Homo sapiens (Human), this protein is Protein MOST-1 (C8orf17).